Reading from the N-terminus, the 212-residue chain is Imidazole glycerol phosphate synthase subunit HisH (212 aa).

A Glutamine amidotransferase type-1 domain is found at 3–212; it reads DVAIIDYGMG…MLANFISWAP (210 aa). The active-site Nucleophile is the Cys-82. Catalysis depends on residues His-192 and Glu-194.

In terms of assembly, heterodimer of HisH and HisF.

It localises to the cytoplasm. The catalysed reaction is 5-[(5-phospho-1-deoxy-D-ribulos-1-ylimino)methylamino]-1-(5-phospho-beta-D-ribosyl)imidazole-4-carboxamide + L-glutamine = D-erythro-1-(imidazol-4-yl)glycerol 3-phosphate + 5-amino-1-(5-phospho-beta-D-ribosyl)imidazole-4-carboxamide + L-glutamate + H(+). It carries out the reaction L-glutamine + H2O = L-glutamate + NH4(+). It functions in the pathway amino-acid biosynthesis; L-histidine biosynthesis; L-histidine from 5-phospho-alpha-D-ribose 1-diphosphate: step 5/9. In terms of biological role, IGPS catalyzes the conversion of PRFAR and glutamine to IGP, AICAR and glutamate. The HisH subunit catalyzes the hydrolysis of glutamine to glutamate and ammonia as part of the synthesis of IGP and AICAR. The resulting ammonia molecule is channeled to the active site of HisF. This is Imidazole glycerol phosphate synthase subunit HisH from Aromatoleum aromaticum (strain DSM 19018 / LMG 30748 / EbN1) (Azoarcus sp. (strain EbN1)).